Consider the following 956-residue polypeptide: MWRAKLRRGTCEPAVKGSPSACYSPSSPVQVLEDSTYFSPDFQLYSGRHETSALTVEATSSIREKVVEDPLCNFHSPNFLRISEVEMRGSEDAAAGTVLQRLIQEQLRYGTPTENMNLLAIQHQATGSAGPAHPTNNFSSTENLTQEDPQMVYQSARQEPQGQEHQVDNTVMEKQVRSTQPQQNNEELPTYEEAKAQSQFFRGQQQQQQQQGAVGHGYYMAGGTSQKSRTEGRPTVNRANSGQAHKDEALKELKQGHVRSLSERIMQLSLERNGAKQHLPGSGNGKGFKVGGGPSPAQPAGKVLDPRGPPPEYPFKTKQMMSPVSKTQEHGLFYGDQHPGMLHEMVKPYPAPQPVRTDVAVLRYQPPPEYGVTSRPCQLPFPSTMQQHSPMSSQTSSASGPLHSVSLPLPLPMALGAPQPPPAASPSQQLGPDAFAIVERAQQMVEILTEENRVLHQELQGYYDNADKLHKFEKELQRISEAYESLVKSTTKRESLDKAMRNKLEGEIRRLHDFNRDLRDRLETANRQLSSREYEGHEDKAAEGHYASQNKEFLKEKEKLEMELAAVRTASEDHRRHIEILDQALSNAQARVIKLEEELREKQAYVEKVEKLQQALTQLQSACEKREQMERRLRTWLERELDALRTQQKHGNGQPANMPEYNAPALLELVREKEERILALEADMTKWEQKYLEESTIRHFAMNAAATAAAERDTTIINHSRNGSYGESSLEAHIWQEEEEVVQANRRCQDMEYTIKNLHAKIIEKDAMIKVLQQRSRKDAGKTDSSSLRPARSVPSIAAATGTHSRQTSLTSSQLAEEKKEEKTWKGSIGLLLGKEHHEHASAPLLPPPPTSALSSIASTTAASSAHAKTGSKDSSTQTDKSAELFWPSMASLPSRGRLSTTPAHSPVLKHPAAKGTAEKLENSPGHGKSPDHRGRVSSLLHKPEFPDGEMMEVLI.

Residues Gln197–Lys246 are disordered. Phosphoserine is present on residues Ser241 and Ser269. Residues Arg259–Leu279 adopt a coiled-coil conformation. Disordered stretches follow at residues Gly274 to Ser322, Pro382 to Val405, and Leu411 to Leu430. Gly residues predominate over residues Ser282–Pro294. The residue at position 295 (Ser295) is a Phosphoserine. The segment covering Pro382–Ala398 has biased composition (polar residues). 2 coiled-coil regions span residues Val438 to Arg639 and Ala665 to Glu694. At Ser720 the chain carries Phosphoserine. Positions Ser729 to Ile762 form a coiled coil. The tract at residues Gln773–Lys823 is disordered. Phosphoserine occurs at positions 793, 805, and 828. Residues Gly802 to Leu815 are compositionally biased toward polar residues. Disordered stretches follow at residues Ala841–Asp880 and Pro894–Pro944. A compositionally biased stretch (low complexity) spans Ser852 to Ala866. Ser900 carries the post-translational modification Phosphoserine. Residue Thr902 is modified to Phosphothreonine. Ser906 carries the phosphoserine modification. The PDZ-binding motif lies at Glu953–Ile956.

It belongs to the angiomotin family. In terms of processing, polyubiquitinated by NEDD4, leading to proteasomal degradation.

It localises to the cell junction. The protein resides in the tight junction. Inhibits the Wnt/beta-catenin signaling pathway, probably by recruiting CTNNB1 to recycling endosomes and hence preventing its translocation to the nucleus. In Homo sapiens (Human), this protein is Angiomotin-like protein 1 (AMOTL1).